We begin with the raw amino-acid sequence, 97 residues long: Protein CYSTEINE-RICH TRANSMEMBRANE MODULE 7 (97 aa).

Residues methionine 1–proline 27 form a disordered region. Positions glycine 15–proline 27 are enriched in pro residues. The chain crosses the membrane as a helical span at residues tyrosine 68 to valine 88.

This sequence belongs to the CYSTM1 family. In terms of assembly, homodimer and heterodimers. Interacts with CYSTM3, CYSTM4, CYSTM5, CYSTM6, CYSTM10, WIH1/CYSTM13 and CYSTM11. Binds weakly to CYSTM1, CYSTM2 and CYSTM12. In terms of tissue distribution, mostly expressed in siliques and, to a lower extent, in stems, roots, leaves and flowers.

Its subcellular location is the cell membrane. Its function is as follows. Involved in resistance to abiotic stress. This Arabidopsis thaliana (Mouse-ear cress) protein is Protein CYSTEINE-RICH TRANSMEMBRANE MODULE 7.